The sequence spans 389 residues: LL-diaminopimelate aminotransferase (389 aa).

2 residues coordinate substrate: Y16 and G41. Residues Y70, 104-105 (SK), Y129, N179, Y210, and 239-241 (SLS) each bind pyridoxal 5'-phosphate. 3 residues coordinate substrate: K105, Y129, and N179. An N6-(pyridoxal phosphate)lysine modification is found at K242. Pyridoxal 5'-phosphate is bound at residue R250. R369 lines the substrate pocket.

This sequence belongs to the class-I pyridoxal-phosphate-dependent aminotransferase family. LL-diaminopimelate aminotransferase subfamily. Homodimer. Requires pyridoxal 5'-phosphate as cofactor.

The catalysed reaction is (2S,6S)-2,6-diaminopimelate + 2-oxoglutarate = (S)-2,3,4,5-tetrahydrodipicolinate + L-glutamate + H2O + H(+). It participates in amino-acid biosynthesis; L-lysine biosynthesis via DAP pathway; LL-2,6-diaminopimelate from (S)-tetrahydrodipicolinate (aminotransferase route): step 1/1. Functionally, involved in the synthesis of meso-diaminopimelate (m-DAP or DL-DAP), required for both lysine and peptidoglycan biosynthesis. Catalyzes the direct conversion of tetrahydrodipicolinate to LL-diaminopimelate. In Nitratidesulfovibrio vulgaris (strain DSM 19637 / Miyazaki F) (Desulfovibrio vulgaris), this protein is LL-diaminopimelate aminotransferase.